We begin with the raw amino-acid sequence, 951 residues long: 5'-3' exoribonuclease 2 (951 aa).

Residues 262 to 278 (PCALCNQFGHEVKDCEG) form a CCHC-type zinc finger. The residue at position 286 (K286) is an N6-acetyllysine. Positions 408–508 (KDDEDSFRRR…SDSEPEPEDN (101 aa)) are disordered. Over residues 416-426 (RRQKEKRKRMK) the composition is skewed to basic residues. Phosphothreonine is present on T439. Polar residues-rich tracts occupy residues 445–458 (SRNS…SNPR) and 467–485 (QRNS…SDGS). A phosphoserine mark is found at S448, S471, S473, S475, S482, S487, S499, S501, and S678. Asymmetric dimethylarginine; alternate occurs at positions 824, 847, and 851. Omega-N-methylarginine; alternate occurs at positions 824, 847, and 851. Asymmetric dimethylarginine is present on R880. Position 883 is an asymmetric dimethylarginine; alternate (R883). The residue at position 883 (R883) is an Omega-N-methylarginine; alternate. An Omega-N-methylarginine modification is found at R895. The interval 907–951 (NQYQMLGGPGGYPPRRDDHRGGRQGYPREGRKYPLPPPSGRYSWN) is disordered. Residues 920-938 (PRRDDHRGGRQGYPREGRK) show a composition bias toward basic and acidic residues. R947 bears the Asymmetric dimethylarginine; alternate mark. R947 is modified (omega-N-methylarginine; alternate).

Belongs to the 5'-3' exonuclease family. XRN2/RAT1 subfamily. In terms of assembly, interacts with POLR2A and SMN1/SMN2. Interacts with CDKN2AIP and NKRF. Interacts with CDKN2AIPNL; the interaction is direct. Interacts with TRIM71 (via NHL repeats) in an RNA-dependent manner. Interacts with DHX34; the interaction is RNA-independent. As to expression, expressed in the spleen, testis, heart, brain, lung, liver, skeletal muscle, and kidney.

It is found in the nucleus. The protein localises to the nucleolus. In terms of biological role, possesses 5'-&gt;3' exoribonuclease activity. May promote the termination of transcription by RNA polymerase II. During transcription termination, cleavage at the polyadenylation site liberates a 5' fragment which is subsequently processed to form the mature mRNA and a 3' fragment which remains attached to the elongating polymerase. The processive degradation of this 3' fragment by this protein may promote termination of transcription. Binds to RNA polymerase II (RNAp II) transcription termination R-loops formed by G-rich pause sites. This chain is 5'-3' exoribonuclease 2 (Xrn2), found in Mus musculus (Mouse).